The chain runs to 271 residues: Aminodeoxychorismate lyase (271 aa).

Lysine 140 is subject to N6-(pyridoxal phosphate)lysine.

Belongs to the class-IV pyridoxal-phosphate-dependent aminotransferase family. Homodimer. Pyridoxal 5'-phosphate serves as cofactor.

It catalyses the reaction 4-amino-4-deoxychorismate = 4-aminobenzoate + pyruvate + H(+). Its pathway is cofactor biosynthesis; tetrahydrofolate biosynthesis; 4-aminobenzoate from chorismate: step 2/2. In terms of biological role, involved in the biosynthesis of p-aminobenzoate (PABA), a precursor of tetrahydrofolate. Converts 4-amino-4-deoxychorismate into 4-aminobenzoate (PABA) and pyruvate. The sequence is that of Aminodeoxychorismate lyase (pabC) from Vibrio harveyi (Beneckea harveyi).